A 378-amino-acid chain; its full sequence is Chaperone protein DnaJ 2 (378 aa).

The region spanning 4–68 (DYYGLLGVSR…EKRRIVDLGG (65 aa)) is the J domain. Residues 128-210 (GVTKQVTVDT…CVGDGRVRAR (83 aa)) form a CR-type zinc finger. Positions 141, 144, 158, 161, 184, 187, 198, and 201 each coordinate Zn(2+). CXXCXGXG motif repeat units follow at residues 141-148 (CDRCQGKG), 158-165 (CDTCGGRG), 184-191 (CPTCRGVG), and 198-205 (CCQCVGDG).

This sequence belongs to the DnaJ family. In terms of assembly, homodimer. It depends on Zn(2+) as a cofactor.

It is found in the cytoplasm. Participates actively in the response to hyperosmotic and heat shock by preventing the aggregation of stress-denatured proteins and by disaggregating proteins, also in an autonomous, DnaK-independent fashion. Unfolded proteins bind initially to DnaJ; upon interaction with the DnaJ-bound protein, DnaK hydrolyzes its bound ATP, resulting in the formation of a stable complex. GrpE releases ADP from DnaK; ATP binding to DnaK triggers the release of the substrate protein, thus completing the reaction cycle. Several rounds of ATP-dependent interactions between DnaJ, DnaK and GrpE are required for fully efficient folding. Also involved, together with DnaK and GrpE, in the DNA replication of plasmids through activation of initiation proteins. The protein is Chaperone protein DnaJ 2 of Mycobacterium leprae (strain TN).